Here is a 376-residue protein sequence, read N- to C-terminus: DNA replication and repair protein RecF (376 aa).

Gly-30–Thr-37 is a binding site for ATP.

This sequence belongs to the RecF family.

The protein localises to the cytoplasm. The RecF protein is involved in DNA metabolism; it is required for DNA replication and normal SOS inducibility. RecF binds preferentially to single-stranded, linear DNA. It also seems to bind ATP. The chain is DNA replication and repair protein RecF from Salinispora arenicola (strain CNS-205).